The sequence spans 420 residues: Type II methyltransferase M.HgiCI (420 aa).

The SAM-dependent MTase C5-type domain occupies 2–417; it reads LKFIDLFAGI…LDLFKSADLA (416 aa). Cys75 is an active-site residue.

This sequence belongs to the class I-like SAM-binding methyltransferase superfamily. C5-methyltransferase family.

It catalyses the reaction a 2'-deoxycytidine in DNA + S-adenosyl-L-methionine = a 5-methyl-2'-deoxycytidine in DNA + S-adenosyl-L-homocysteine + H(+). Its function is as follows. A methylase that recognizes the double-stranded sequence 5'-GGYRCC-3', methylates C-5 on both strands, and protects the DNA from cleavage by the HgiCI endonuclease. In Herpetosiphon aurantiacus (Herpetosiphon giganteus), this protein is Type II methyltransferase M.HgiCI (hgiCIM).